The primary structure comprises 507 residues: ATP synthase subunit alpha, chloroplastic (507 aa).

Residue 170-177 (GDRQTGKT) participates in ATP binding.

It belongs to the ATPase alpha/beta chains family. F-type ATPases have 2 components, CF(1) - the catalytic core - and CF(0) - the membrane proton channel. CF(1) has five subunits: alpha(3), beta(3), gamma(1), delta(1), epsilon(1). CF(0) has four main subunits: a, b, b' and c.

Its subcellular location is the plastid. The protein localises to the chloroplast thylakoid membrane. It catalyses the reaction ATP + H2O + 4 H(+)(in) = ADP + phosphate + 5 H(+)(out). Functionally, produces ATP from ADP in the presence of a proton gradient across the membrane. The alpha chain is a regulatory subunit. The polypeptide is ATP synthase subunit alpha, chloroplastic (Cucumis sativus (Cucumber)).